The sequence spans 339 residues: Fructose-1,6-bisphosphatase class 1 (339 aa).

Positions 92, 114, 116, and 117 each coordinate Mg(2+). Substrate-binding positions include Asp117–Ser120, Asn213, and Lys279. Position 285 (Glu285) interacts with Mg(2+).

This sequence belongs to the FBPase class 1 family. As to quaternary structure, homotetramer. Requires Mg(2+) as cofactor.

The protein localises to the cytoplasm. The enzyme catalyses beta-D-fructose 1,6-bisphosphate + H2O = beta-D-fructose 6-phosphate + phosphate. It functions in the pathway carbohydrate biosynthesis; gluconeogenesis. The chain is Fructose-1,6-bisphosphatase class 1 from Acidovorax sp. (strain JS42).